Reading from the N-terminus, the 118-residue chain is Large ribosomal subunit protein bL19 (118 aa).

It belongs to the bacterial ribosomal protein bL19 family.

Its function is as follows. This protein is located at the 30S-50S ribosomal subunit interface and may play a role in the structure and function of the aminoacyl-tRNA binding site. The polypeptide is Large ribosomal subunit protein bL19 (Salinispora arenicola (strain CNS-205)).